Here is a 204-residue protein sequence, read N- to C-terminus: N-(5'-phosphoribosyl)anthranilate isomerase (204 aa).

The protein belongs to the TrpF family.

The enzyme catalyses N-(5-phospho-beta-D-ribosyl)anthranilate = 1-(2-carboxyphenylamino)-1-deoxy-D-ribulose 5-phosphate. Its pathway is amino-acid biosynthesis; L-tryptophan biosynthesis; L-tryptophan from chorismate: step 3/5. The sequence is that of N-(5'-phosphoribosyl)anthranilate isomerase from Bacillus anthracis (strain A0248).